The chain runs to 131 residues: Large-conductance mechanosensitive channel (131 aa).

A run of 2 helical transmembrane segments spans residues 21-41 (VGVIIGGAFGKIVSSLVADVI) and 76-96 (GMFIQNIFDFIIIAFAIFLMI).

Belongs to the MscL family. Homopentamer.

The protein resides in the cell inner membrane. Functionally, channel that opens in response to stretch forces in the membrane lipid bilayer. May participate in the regulation of osmotic pressure changes within the cell. In Histophilus somni (strain 129Pt) (Haemophilus somnus), this protein is Large-conductance mechanosensitive channel.